Here is a 160-residue protein sequence, read N- to C-terminus: Nucleotide-binding protein Bpet3698 (160 aa).

It belongs to the YajQ family.

Functionally, nucleotide-binding protein. The chain is Nucleotide-binding protein Bpet3698 from Bordetella petrii (strain ATCC BAA-461 / DSM 12804 / CCUG 43448).